The sequence spans 651 residues: Crossover junction endonuclease MUS81 (651 aa).

Residues 99-124 (RKHEVSDTSNLPDAKPKKQRKQKQYI) are disordered. Over residues 115-124 (KKQRKQKQYI) the composition is skewed to basic residues. In terms of domain architecture, ERCC4 spans 361–458 (ILIIDNREIR…QFYYLVEDVV (98 aa)).

This sequence belongs to the XPF family. In terms of assembly, interacts with EME1. Mg(2+) serves as cofactor.

Its subcellular location is the nucleus. Interacts with EME1 to form a DNA structure-specific endonuclease with substrate preference for branched DNA structures with a 5'-end at the branch nick. Typical substrates include 3'-flap structures, D-loops, replication forks and nicked Holliday junctions. May be required in mitosis for the processing of stalled or collapsed replication fork intermediates. May be required in meiosis for the repair of meiosis-specific double strand breaks subsequent to single-end invasion (SEI). The polypeptide is Crossover junction endonuclease MUS81 (MUS81) (Debaryomyces hansenii (strain ATCC 36239 / CBS 767 / BCRC 21394 / JCM 1990 / NBRC 0083 / IGC 2968) (Yeast)).